A 153-amino-acid chain; its full sequence is MIFSLYLIVAISLADLTAAQQECDCKNRFCFPNVVANWIGAAEYCSRNGWRLAILDTEEKQQQVEEQAQKVDAFKTNKVELWIGASDLAKEGKFVWHGTGIDVSYEKWIAGMPDNRNGNEHCVHLWYEPSRSFQWQWNDVVCSSTRRFVCERM.

The N-terminal stretch at methionine 1 to alanine 19 is a signal peptide. The C-type lectin domain maps to lysine 26–glutamate 151. 2 disulfides stabilise this stretch: cysteine 45-cysteine 150 and cysteine 122-cysteine 142.

The cofactor is Ca(2+). Expressed in female salivary gland. Not detected or low-level expression in female midgut and fat body.

The protein resides in the secreted. Salivary protein with carbohydrate-binding activity; exibits high affinity for D-mannose. Agglutinates host erythrocytes. Probably participates in mosquito innate immune responses to prevent microorganism multiplication in sugar and blood meals. Functionally, (Microbial infection) Agglutinates Staphylococcus aureus in vitro. In terms of biological role, (Microbial infection) Agglutinates Candida albicans in vitro. Its function is as follows. (Microbial infection) Does not agglutinate Escherichia coli in vitro. This Aedes albopictus (Asian tiger mosquito) protein is Salivary C-type lectin 1.